The sequence spans 306 residues: NAD-dependent protein deacylase (306 aa).

The 305-residue stretch at 1 to 305 folds into the Deacetylase sirtuin-type domain; that stretch reads MNKQLKEFQE…PIALKPLIGD (305 aa). Position 23–42 (23–42) interacts with NAD(+); that stretch reads GAGLSASSGLPTFRGSQGLW. Substrate is bound by residues Y67 and R70. 103-106 contributes to the NAD(+) binding site; the sequence is QNVD. Catalysis depends on H123, which acts as the Proton acceptor. Residues C131, C136, C200, and C203 each coordinate Zn(2+). NAD(+) contacts are provided by residues 243-245, 269-271, and A291; these read GTS and NTD.

Belongs to the sirtuin family. Class III subfamily. Requires Zn(2+) as cofactor.

It is found in the mitochondrion. It catalyses the reaction N(6)-malonyl-L-lysyl-[protein] + NAD(+) + H2O = 2''-O-malonyl-ADP-D-ribose + nicotinamide + L-lysyl-[protein]. The enzyme catalyses N(6)-succinyl-L-lysyl-[protein] + NAD(+) + H2O = 2''-O-succinyl-ADP-D-ribose + nicotinamide + L-lysyl-[protein]. It carries out the reaction N(6)-glutaryl-L-lysyl-[protein] + NAD(+) + H2O = 2''-O-glutaryl-ADP-D-ribose + nicotinamide + L-lysyl-[protein]. Functionally, NAD-dependent lysine demalonylase, desuccinylase and deglutarylase that specifically removes malonyl, succinyl and glutaryl groups on target proteins. Has weak NAD-dependent protein deacetylase activity; however this activity may not be physiologically relevant in vivo. The sequence is that of NAD-dependent protein deacylase from Candida albicans (strain SC5314 / ATCC MYA-2876) (Yeast).